The sequence spans 1088 residues: Ran-binding protein 17 (1088 aa).

The residue at position 2 (A2) is an N-acetylalanine. S569 bears the Phosphoserine mark.

Belongs to the exportin family. Binds to nucleoporins and the GTP-bound form of Ran. Highly expressed in testis, moderately in pancreas and weakly in other tissues studied.

Its subcellular location is the cytoplasm. It is found in the nucleus. The protein resides in the nuclear pore complex. May function as a nuclear transport receptor. This chain is Ran-binding protein 17 (RANBP17), found in Homo sapiens (Human).